A 2907-amino-acid chain; its full sequence is Fibrillin-2 (2907 aa).

An N-terminal signal peptide occupies residues 1–28; the sequence is MGRRRRLCLQPYFVWLGCVALWAQGTDG. Residues 26–58 are disordered; it reads TDGQPQPPPPKTLRPQPPPQQVRPAVAGSEGGF. A propeptide spanning residues 29–77 is cleaved from the precursor; that stretch reads QPQPPPPKTLRPQPPPQQVRPAVAGSEGGFMGPEYRDEGAVAASRVRRR. The segment covering 30–46 has biased composition (pro residues); that stretch reads PQPPPPKTLRPQPPPQQ. 3 consecutive EGF-like domains span residues 111–142, 145–176, and 176–208; these read IVPI…PTCG, SIQQ…TYCG, and GQPV…PQCE. 9 disulfides stabilise this stretch: Cys-115–Cys-124, Cys-119–Cys-130, Cys-132–Cys-141, Cys-149–Cys-159, Cys-153–Cys-164, Cys-166–Cys-175, Cys-180–Cys-190, Cys-184–Cys-196, and Cys-198–Cys-207. Residues 149–359 form an interaction with MFAP4 region; the sequence is CSVRCMNGGT…VTSTDGSRCI (211 aa). The TB 1 domain occupies 214–266; that stretch reads GPCFTQVNNQMCQGQLTGIVCTKTLCCATIGRAWGHPCEMCPAQPQPCRRGFI. In terms of domain architecture, EGF-like 4; calcium-binding spans 276–317; it reads DVDECQAIPGLCQGGNCINTVGSFECRCPAGHKQSETTQKCE. Intrachain disulfides connect Cys-280–Cys-292, Cys-287–Cys-301, Cys-303–Cys-316, Cys-322–Cys-334, Cys-329–Cys-343, and Cys-345–Cys-358. Residue Ser-298 is glycosylated (O-linked (Glc) serine). Residues 318–359 form the EGF-like 5; calcium-binding domain; the sequence is DIDECSVIPGVCETGDCSNTVGSYFCLCPRGFVTSTDGSRCI. O-linked (Glc) serine glycosylation occurs at Ser-340. One can recognise a TB 2 domain in the interval 364–417; that stretch reads GTCFSGLVNGRCAQELPGRMAKAQCCCEPGRCWSIGTIPEACPVRGSEEYRRLC. N-linked (GlcNAc...) asparagine glycosylation occurs at Asn-485. Residues 487-527 enclose the EGF-like 6 domain; sequence TIDICKHHANLCLNGRCIPTVSSYRCECNMGYKQDANGDCI. 15 disulfide bridges follow: Cys-491–Cys-503, Cys-498–Cys-512, Cys-514–Cys-526, Cys-532–Cys-542, Cys-537–Cys-551, Cys-553–Cys-566, Cys-572–Cys-584, Cys-579–Cys-593, Cys-595–Cys-608, Cys-614–Cys-625, Cys-620–Cys-634, Cys-636–Cys-649, Cys-655–Cys-666, Cys-661–Cys-675, and Cys-677–Cys-690. Ser-509 carries O-linked (Glc) serine glycosylation. The EGF-like 7; calcium-binding domain maps to 528-567; it reads DVDECTSNPCSNGDCVNTPGSYYCKCHAGFQRTPTKQACI. O-linked (Glc) serine glycosylation is present at Ser-548. Positions 568-609 constitute an EGF-like 8; calcium-binding domain; it reads DIDECIQNGVLCKNGRCVNTDGSFQCICNAGFELTTDGKNCV. Ser-590 carries O-linked (Glc) serine glycosylation. Residues 610–650 enclose the EGF-like 9; calcium-binding domain; it reads DHDECTTTNMCLNGMCINEDGSFKCVCKPGFILAPNGRYCT. A glycan (O-linked (Glc) serine) is linked at Ser-631. Residues 651-691 form the EGF-like 10; calcium-binding domain; the sequence is DVDECQTPGICMNGHCINNEGSFRCDCPPGLAVGVDGRVCV. O-linked (Glc) serine glycosylation occurs at Ser-672. A TB 3 domain is found at 697 to 749; the sequence is STCYGEIKKGVCVRPFPGAVTKSECCCANPDYGFGEPCQPCPAKNSAEFHGLC. Residues 761–802 enclose the EGF-like 11; calcium-binding domain; it reads DINECALDPDICANGICENLRGSYRCNCNSGYEPDASGRNCI. 9 cysteine pairs are disulfide-bonded: Cys-765-Cys-777, Cys-772-Cys-786, Cys-788-Cys-801, Cys-807-Cys-819, Cys-814-Cys-828, Cys-830-Cys-843, Cys-849-Cys-859, Cys-854-Cys-868, and Cys-870-Cys-883. Residues 803 to 844 enclose the EGF-like 12; calcium-binding domain; that stretch reads DIDECLVNRLLCDNGLCRNTPGSYSCTCPPGYVFRTETETCE. The O-linked (Glc) serine glycan is linked to Ser-825. In terms of domain architecture, EGF-like 13; calcium-binding spans 845–883; that stretch reads DVNECESNPCVNGACRNNLGSFHCECSPGSKLSSTGLIC. Ser-865 carries O-linked (Glc) serine glycosylation. Positions 889-940 constitute a TB 4 domain; it reads GTCWLNIQDNRCEVNINGATLKSECCATLGAAWGSPCERCELDAACPRGFAR. The EGF-like 14; calcium-binding domain maps to 948–989; sequence DVNECEVFPGVCPNGRCVNSKGSFHCECPEGLTLDGTGRVCL. Cystine bridges form between Cys-952–Cys-964, Cys-959–Cys-973, and Cys-975–Cys-988. Ser-970 is a glycosylation site (O-linked (Glc) serine). The TB 5 domain occupies 994–1045; that stretch reads EHCFLKWDEDECIHPVPGKFRMDACCCAVGAAWGTECEECPKPGTKEYETLC. Residues 1066–1107 form the EGF-like 15; calcium-binding domain; it reads DINECKAFPGMCTYGKCRNTIGSFKCRCNNGFALDMEERNCT. 36 disulfide bridges follow: Cys-1070/Cys-1082, Cys-1077/Cys-1091, Cys-1093/Cys-1106, Cys-1112/Cys-1124, Cys-1119/Cys-1133, Cys-1135/Cys-1149, Cys-1155/Cys-1167, Cys-1162/Cys-1176, Cys-1178/Cys-1191, Cys-1197/Cys-1209, Cys-1204/Cys-1218, Cys-1220/Cys-1233, Cys-1239/Cys-1250, Cys-1246/Cys-1259, Cys-1261/Cys-1274, Cys-1280/Cys-1292, Cys-1287/Cys-1301, Cys-1303/Cys-1316, Cys-1322/Cys-1334, Cys-1329/Cys-1343, Cys-1345/Cys-1358, Cys-1364/Cys-1377, Cys-1371/Cys-1386, Cys-1388/Cys-1399, Cys-1405/Cys-1418, Cys-1412/Cys-1427, Cys-1429/Cys-1440, Cys-1446/Cys-1458, Cys-1453/Cys-1467, Cys-1469/Cys-1482, Cys-1488/Cys-1499, Cys-1494/Cys-1508, Cys-1510/Cys-1523, Cys-1529/Cys-1540, Cys-1535/Cys-1549, and Cys-1551/Cys-1564. Ser-1088 carries an O-linked (Glc) serine glycan. N-linked (GlcNAc...) asparagine glycosylation occurs at Asn-1105. Residues 1108–1150 enclose the EGF-like 16; calcium-binding domain; the sequence is DIDECRISPDLCGSGICVNTPGSFECECFEGYESGFMMMKNCM. Residues 1151 to 1192 form the EGF-like 17; calcium-binding domain; the sequence is DIDECERNPLLCRGGTCVNTEGSFQCDCPLGHELSPSREDCV. Ser-1173 carries an O-linked (Glc) serine glycan. In terms of domain architecture, EGF-like 18; calcium-binding spans 1193–1234; the sequence is DINECSLSDNLCRNGKCVNMIGTYQCSCNPGYQATPDRQGCT. Thr-1215 carries O-linked (Glc) threonine glycosylation. In terms of domain architecture, EGF-like 19; calcium-binding spans 1235–1275; sequence DIDECMIMNGGCDTQCTNSEGSYECSCSEGYALMPDGRSCA. Ser-1256 carries O-linked (Glc) serine glycosylation. An EGF-like 20; calcium-binding domain is found at 1276-1317; it reads DIDECENNPDICDGGQCTNIPGEYRCLCYDGFMASMDMKTCI. The EGF-like 21; calcium-binding domain maps to 1318 to 1359; sequence DVNECDLNPNICMFGECENTKGSFICHCQLGYSVKKGTTGCT. Ser-1340 is a glycosylation site (O-linked (Glc) serine). The EGF-like 22; calcium-binding domain maps to 1360 to 1400; that stretch reads DVDECEIGAHNCDMHASCLNVPGSFKCSCREGWVGNGIKCI. An O-linked (Glc) serine glycan is attached at Ser-1383. The EGF-like 23; calcium-binding domain maps to 1401-1441; that stretch reads DLDECANGTHQCSINAQCVNTPGSYRCACSEGFTGDGFTCS. N-linked (GlcNAc...) asparagine glycosylation is present at Asn-1407. The EGF-like 24; calcium-binding domain occupies 1442 to 1483; sequence DVDECAENTNLCENGQCLNVPGAYRCECEMGFTPASDSRSCQ. One can recognise an EGF-like 25; calcium-binding domain in the interval 1484–1524; that stretch reads DIDECSFQNICVFGTCNNLPGMFHCICDDGYELDRTGGNCT. N-linked (GlcNAc...) asparagine glycosylation occurs at Asn-1522. The region spanning 1525-1565 is the EGF-like 26; calcium-binding domain; sequence DIDECADPINCVNGLCVNTPGRYECNCPPDFQLNPTGVGCV. One can recognise a TB 6 domain in the interval 1570-1626; that stretch reads GNCYLKFGPRGDGSLSCNTEVGVGVSRSSCCCSLGKAWGNPCETCPPVNSTEYYTLC. An N-linked (GlcNAc...) asparagine glycan is attached at Asn-1618. Positions 1643 to 1684 constitute an EGF-like 27; calcium-binding domain; sequence DIDECQELPGLCQGGNCINTFGSFQCECPQGYYLSEETRICE. 6 disulfides stabilise this stretch: Cys-1647-Cys-1659, Cys-1654-Cys-1668, Cys-1670-Cys-1683, Cys-1689-Cys-1701, Cys-1696-Cys-1710, and Cys-1712-Cys-1725. Ser-1665 carries O-linked (Glc) serine glycosylation. Positions 1685 to 1726 constitute an EGF-like 28; calcium-binding domain; that stretch reads DIDECFAHPGVCGPGTCYNTLGNYTCICPPEYMQVNGGHNCM. The N-linked (GlcNAc...) asparagine glycan is linked to Asn-1707. An interaction with MFAP4 region spans residues 1728–2164; it reads MRKSFCYRSY…VPSLHDTRED (437 aa). The TB 7 domain maps to 1731 to 1784; that stretch reads SFCYRSYNGTTCENELPFNVTKRMCCCTYNVGKAWNKPCEPCPTPGTADFKTIC. N-linked (GlcNAc...) asparagine glycans are attached at residues Asn-1738 and Asn-1749. In terms of domain architecture, EGF-like 29; calcium-binding spans 1801–1842; the sequence is DIDECKEIPGICANGVCINQIGSFRCECPTGFSYNDLLLVCE. Disulfide bonds link Cys-1805/Cys-1817, Cys-1812/Cys-1826, Cys-1828/Cys-1841, Cys-1847/Cys-1860, Cys-1854/Cys-1869, Cys-1871/Cys-1883, Cys-1889/Cys-1901, Cys-1896/Cys-1910, Cys-1912/Cys-1925, Cys-1931/Cys-1941, Cys-1936/Cys-1950, Cys-1952/Cys-1964, Cys-1970/Cys-1983, Cys-1978/Cys-1992, Cys-1994/Cys-2007, Cys-2013/Cys-2025, Cys-2020/Cys-2034, Cys-2036/Cys-2047, Cys-2053/Cys-2065, Cys-2060/Cys-2074, and Cys-2076/Cys-2089. Residues 1843–1884 enclose the EGF-like 30; calcium-binding domain; that stretch reads DIDECSNGDNLCQRNADCINSPGSYRCECAAGFKLSPNGACV. Residue Ser-1866 is glycosylated (O-linked (Glc) serine). One can recognise an EGF-like 31; calcium-binding domain in the interval 1885 to 1926; the sequence is DRNECLEIPNVCSHGLCVDLQGSYQCICNNGFKASQDQTMCM. Positions 1927–1965 constitute an EGF-like 32; calcium-binding domain; it reads DVDECERHPCGNGTCKNTVGSYNCLCYPGFELTHNNDCL. N-linked (GlcNAc...) asparagine glycosylation is present at Asn-1938. Ser-1947 is a glycosylation site (O-linked (Glc) serine). One can recognise an EGF-like 33; calcium-binding domain in the interval 1966-2008; that stretch reads DIDECSSFFGQVCRNGRCFNEIGSFKCLCNEGYELTPDGKNCI. O-linked (Glc) serine glycosylation is present at Ser-1989. The 40-residue stretch at 2009-2048 folds into the EGF-like 34; calcium-binding domain; it reads DTNECVALPGSCSPGTCQNLEGSFRCICPPGYEVRSENCI. The 42-residue stretch at 2049–2090 folds into the EGF-like 35; calcium-binding domain; that stretch reads DINECDEDPNICLFGSCTNTPGGFQCICPPGFVLSDNGRRCF. One can recognise a TB 8 domain in the interval 2095-2148; sequence SFCFTNFENGKCSVPKAFNTTKAKCCCSKMPGEGWGDPCELCPKDDEVAFQDLC. N-linked (GlcNAc...) asparagine glycosylation is present at Asn-2113. Residues 2164–2205 enclose the EGF-like 36; calcium-binding domain; that stretch reads DVNECLESPGICSNGQCINTDGSFRCECPMGYNLDYTGVRCV. 15 cysteine pairs are disulfide-bonded: Cys-2168–Cys-2180, Cys-2175–Cys-2189, Cys-2191–Cys-2204, Cys-2210–Cys-2221, Cys-2216–Cys-2230, Cys-2232–Cys-2244, Cys-2250–Cys-2261, Cys-2257–Cys-2270, Cys-2272–Cys-2285, Cys-2291–Cys-2305, Cys-2298–Cys-2314, Cys-2316–Cys-2329, Cys-2335–Cys-2347, Cys-2342–Cys-2356, and Cys-2358–Cys-2371. Ser-2186 is a glycosylation site (O-linked (Glc) serine). One can recognise an EGF-like 37; calcium-binding domain in the interval 2206–2245; the sequence is DTDECSIGNPCGNGTCTNVIGSFECTCNEGFEPGPMMNCE. A glycan (N-linked (GlcNAc...) asparagine) is linked at Asn-2218. The EGF-like 38; calcium-binding domain maps to 2246–2286; sequence DINECAQNPLLCAFRCMNTFGSYECTCPVGYALREDQKMCK. Residue Ser-2267 is glycosylated (O-linked (Glc) serine). One can recognise an EGF-like 39; calcium-binding domain in the interval 2287–2330; the sequence is DLDECAEGLHDCESRGMMCKNLIGTFMCICPPGMARRPDGEGCV. Residues 2331–2372 form the EGF-like 40; calcium-binding domain; that stretch reads DENECRTKPGICENGRCVNIIGSYRCECNEGFQSSSSGTECL. Ser-2353 is a glycosylation site (O-linked (Glc) serine). Residues 2377-2430 form the TB 9 domain; sequence GLCFAEVLQTMCQMASSSRNLVTKSECCCDGGRGWGHQCELCPLPGTAQYKKIC. The EGF-like 41; calcium-binding domain maps to 2442–2483; it reads DIDECKVMPSLCTNGQCVNTMGSFRCFCKVGYTTDISGTACV. Cystine bridges form between Cys-2446-Cys-2458, Cys-2453-Cys-2467, Cys-2469-Cys-2482, Cys-2488-Cys-2499, Cys-2495-Cys-2508, Cys-2510-Cys-2523, Cys-2529-Cys-2540, Cys-2536-Cys-2549, Cys-2551-Cys-2562, Cys-2568-Cys-2581, Cys-2575-Cys-2590, Cys-2592-Cys-2605, Cys-2611-Cys-2621, Cys-2617-Cys-2630, Cys-2632-Cys-2645, Cys-2651-Cys-2662, Cys-2657-Cys-2671, Cys-2673-Cys-2686, Cys-2692-Cys-2703, Cys-2699-Cys-2712, and Cys-2714-Cys-2726. The O-linked (Glc) serine glycan is linked to Ser-2464. Residues 2484-2524 form the EGF-like 42; calcium-binding domain; it reads DLDECSQSPKPCNFICKNTKGSYQCSCPRGYVLQEDGKTCK. Ser-2505 is a glycosylation site (O-linked (Glc) serine). The EGF-like 43; calcium-binding domain occupies 2525 to 2563; that stretch reads DLDECQTKQHNCQFLCVNTLGGFTCKCPPGFTQHHTACI. Residues 2564–2606 form the EGF-like 44; calcium-binding domain; that stretch reads DNNECGSQPSLCGAKGICQNTPGSFSCECQRGFSLDASGLNCE. Ser-2587 is a glycosylation site (O-linked (Glc) serine). One can recognise an EGF-like 45; calcium-binding domain in the interval 2607–2646; it reads DVDECDGNHRCQHGCQNILGGYRCGCPQGYVQHYQWNQCV. An EGF-like 46; calcium-binding domain is found at 2647-2687; the sequence is DENECSNPGACGSASCYNTLGSYKCACPSGFSFDQFSSACH. An O-linked (Glc) serine glycan is attached at Ser-2668. Residues 2688–2727 enclose the EGF-like 47; calcium-binding domain; the sequence is DVNECSSSKNPCSYGCSNTEGGYLCGCPPGYFRVGQGHCV. A glycan (N-linked (GlcNAc...) asparagine) is linked at Asn-2803.

It belongs to the fibrillin family. As to quaternary structure, interacts with BMP2, BMP4, BMP7, BMP10 and GDF5. Interacts with MFAP2 and MFAP5. Interacts with ADAMTSL5. Interacts with MFAP4. N-glycosylated. Post-translationally, O-glycosylated on serine residues by POGLUT2 and POGLUT3. As to expression, widely expressed.

The protein resides in the secreted. It localises to the extracellular space. Its subcellular location is the extracellular matrix. Fibrillins are structural components of 10-12 nm extracellular calcium-binding microfibrils, which occur either in association with elastin or in elastin-free bundles. Fibrillin-2-containing microfibrils regulate the early process of elastic fiber assembly. Regulates osteoblast maturation by controlling TGF-beta bioavailability and calibrating TGF-beta and BMP levels, respectively. Functionally, hormone secreted by trophoblasts that promotes trophoblast invasiveness. Has glucogenic activity: is able to increase plasma glucose levels. This is Fibrillin-2 from Mus musculus (Mouse).